The following is a 414-amino-acid chain: Alanine--glyoxylate aminotransferase (414 aa).

The transit peptide at 1 to 23 directs the protein to the mitochondrion; sequence MFRMLAKASVTLGSRAAGWVRTM. Residue Lys-231 is modified to N6-(pyridoxal phosphate)lysine. At Lys-247 the chain carries N6-acetyllysine; alternate. N6-succinyllysine; alternate is present on Lys-247. Lys-256 carries the post-translational modification N6-acetyllysine. At Lys-330 the chain carries N6-acetyllysine; alternate. Lys-330 carries the N6-succinyllysine; alternate modification. The residue at position 334 (Lys-334) is an N6-acetyllysine. Residue Arg-382 participates in substrate binding. The Microbody targeting signal signature appears at 412–414; it reads NKL.

This sequence belongs to the class-V pyridoxal-phosphate-dependent aminotransferase family. In terms of assembly, homodimer. Requires pyridoxal 5'-phosphate as cofactor.

It localises to the peroxisome. The protein localises to the mitochondrion matrix. The catalysed reaction is L-serine + pyruvate = 3-hydroxypyruvate + L-alanine. It carries out the reaction glyoxylate + L-alanine = glycine + pyruvate. Functionally, catalyzes the transamination of glyoxylate to glycine and contributes to the glyoxylate detoxification. Its function is as follows. Catalyzes the transamination between L-serine and pyruvate and weakly contributes to gluconeogenesis from the L-serine metabolism. In Mus musculus (Mouse), this protein is Alanine--glyoxylate aminotransferase.